We begin with the raw amino-acid sequence, 850 residues long: G-type lectin S-receptor-like serine/threonine-protein kinase CES101 (850 aa).

Positions 1 to 22 (MWSNCIFLTLFTFYLFLGQSCC) are cleaved as a signal peptide. Residues 23–423 (QTDTLLQGQY…IKGSKLAATW (401 aa)) lie on the Extracellular side of the membrane. The Bulb-type lectin domain maps to 24–144 (TDTLLQGQYL…DSDGSMKRTL (121 aa)). N-linked (GlcNAc...) asparagine glycans are attached at residues Asn-55, Asn-118, Asn-194, and Asn-374. The 83-residue stretch at 334-416 (CSRFGYTFRE…PRTIYIRIKG (83 aa)) folds into the PAN domain. 2 disulfide bridges follow: Cys-367–Cys-390 and Cys-371–Cys-377. A helical transmembrane segment spans residues 424-444 (LVVVASLFLIIPVTWLIIYLV). Residues 445-850 (LRKFKIKGTN…RVTITVMEAR (406 aa)) are Cytoplasmic-facing. Residues 527–816 (FSDANKLGEG…ALSLPKEPAF (290 aa)) form the Protein kinase domain. Residues 533–541 (LGEGGFGPV) and Lys-555 each bind ATP. At Ser-561 the chain carries Phosphoserine. The segment at 616 to 633 (LRKIVLDWKLRFRIMEGI) is caM-binding. Catalysis depends on Asp-652, which acts as the Proton acceptor. Residue Ser-669 is modified to Phosphoserine. At Thr-686 the chain carries Phosphothreonine. Phosphoserine is present on residues Ser-730 and Ser-838. Residue Thr-845 is modified to Phosphothreonine.

The protein belongs to the protein kinase superfamily. Ser/Thr protein kinase family. In terms of tissue distribution, mostly expressed in leaves, and, to a lower extent, in roots and flowers.

Its subcellular location is the cell membrane. The enzyme catalyses L-seryl-[protein] + ATP = O-phospho-L-seryl-[protein] + ADP + H(+). It carries out the reaction L-threonyl-[protein] + ATP = O-phospho-L-threonyl-[protein] + ADP + H(+). Promotes the expression of genes involved in photosynthesis at least in dedifferentiated calli. The chain is G-type lectin S-receptor-like serine/threonine-protein kinase CES101 (CES101) from Arabidopsis thaliana (Mouse-ear cress).